Reading from the N-terminus, the 77-residue chain is Conotoxin VnMEKL-0111 (77 aa).

The signal sequence occupies residues 1-19; it reads MEKLTILLLVAAVLMSTQA. The propeptide occupies 20–46; sequence LIQHDGEKSQKAKMKFLTARTLSAKTR. 3 cysteine pairs are disulfide-bonded: C50–C66, C57–C71, and C65–C75.

It belongs to the conotoxin O2 superfamily. Expressed by the venom duct.

It is found in the secreted. This chain is Conotoxin VnMEKL-0111, found in Conus ventricosus (Mediterranean cone).